The following is a 282-amino-acid chain: Light-independent protochlorophyllide reductase iron-sulfur ATP-binding protein (282 aa).

ATP is bound by residues 10 to 15 and lysine 39; that span reads GIGKST. A Mg(2+)-binding site is contributed by serine 14. [4Fe-4S] cluster contacts are provided by cysteine 95 and cysteine 129. 180–181 is an ATP binding site; the sequence is NR.

This sequence belongs to the NifH/BchL/ChlL family. As to quaternary structure, homodimer. Protochlorophyllide reductase is composed of three subunits; ChlL, ChlN and ChlB. Requires [4Fe-4S] cluster as cofactor.

The protein resides in the plastid. It is found in the cyanelle. It carries out the reaction chlorophyllide a + oxidized 2[4Fe-4S]-[ferredoxin] + 2 ADP + 2 phosphate = protochlorophyllide a + reduced 2[4Fe-4S]-[ferredoxin] + 2 ATP + 2 H2O. It participates in porphyrin-containing compound metabolism; chlorophyll biosynthesis (light-independent). Functionally, component of the dark-operative protochlorophyllide reductase (DPOR) that uses Mg-ATP and reduced ferredoxin to reduce ring D of protochlorophyllide (Pchlide) to form chlorophyllide a (Chlide). This reaction is light-independent. The L component serves as a unique electron donor to the NB-component of the complex, and binds Mg-ATP. The polypeptide is Light-independent protochlorophyllide reductase iron-sulfur ATP-binding protein (Cyanophora paradoxa).